We begin with the raw amino-acid sequence, 265 residues long: Dehydrin COR47 (265 aa).

Basic and acidic residues predominate over residues 1-14 (MAEEYKNNVPEHET). The disordered stretch occupies residues 1 to 265 (MAEEYKNNVP…EVKKEKESDD (265 aa)). A2 carries the post-translational modification N-acetylalanine. Polar residues predominate over residues 16–28 (TVATEESPATTTE). Residues 29–47 (VTDRGLFDFLGKKEEEVKP) show a composition bias toward basic and acidic residues. Position 64 is a phosphoserine (S64). A compositionally biased stretch (basic and acidic residues) spans 69-79 (AAEHEEVKENK). T90 is subject to Phosphothreonine. Composition is skewed to basic and acidic residues over residues 96–105 (NKPSVIEKLH) and 129–156 (IVEGEEDKKGLVEKIKEKLPGHHDKTAE). The stretch at 133–153 (EEDKKGLVEKIKEKLPGHHDK) is repeat 1. Positions 133 to 251 (EEDKKGLVEK…KEKLPGYHAK (119 aa)) are 3 X 21 AA repeats, Lys-rich. The segment covering 160 to 172 (PVSTTIPVPVSES) has biased composition (low complexity). Composition is skewed to basic and acidic residues over residues 173–204 (VVEHDHPEEEKKGLVEKIKEKLPGHHDEKAED) and 227–265 (PVEHPEEKKGILEKIKEKLPGYHAKTTEEEVKKEKESDD). Tandem repeats lie at residues 180 to 200 (EEEKKGLVEKIKEKLPGHHDE) and 231 to 251 (PEEKKGILEKIKEKLPGYHAK).

This sequence belongs to the plant dehydrin family.

This Arabidopsis thaliana (Mouse-ear cress) protein is Dehydrin COR47 (COR47).